We begin with the raw amino-acid sequence, 828 residues long: Periplasmic nitrate reductase (828 aa).

Positions 1–31 form a signal peptide, tat-type signal; that stretch reads MKLSRRSFMKANAVAAAAAAAGLSVPGVARA. Positions 39 to 95 constitute a 4Fe-4S Mo/W bis-MGD-type domain; sequence IKWDKAPCRFCGTGCGVLVGTQQGRVVACQGDPDAPVNRGLNCIKGYFLPKIMYGKD. [4Fe-4S] cluster-binding residues include cysteine 46, cysteine 49, cysteine 53, and cysteine 81. Mo-bis(molybdopterin guanine dinucleotide) contacts are provided by residues lysine 83, glutamine 150, asparagine 175, cysteine 179, 212 to 219, 243 to 247, 262 to 264, methionine 372, glutamine 376, asparagine 482, 508 to 509, lysine 531, aspartate 558, and 718 to 727; these read WGANMAEM, STYQH, QSD, SD, and TGRVLEHWHT. Substrate is bound at residue phenylalanine 794. Asparagine 802 and lysine 819 together coordinate Mo-bis(molybdopterin guanine dinucleotide).

It belongs to the prokaryotic molybdopterin-containing oxidoreductase family. NasA/NapA/NarB subfamily. As to quaternary structure, component of the periplasmic nitrate reductase NapAB complex composed of NapA and NapB. It depends on [4Fe-4S] cluster as a cofactor. Mo-bis(molybdopterin guanine dinucleotide) serves as cofactor. Post-translationally, predicted to be exported by the Tat system. The position of the signal peptide cleavage has not been experimentally proven.

The protein localises to the periplasm. It carries out the reaction 2 Fe(II)-[cytochrome] + nitrate + 2 H(+) = 2 Fe(III)-[cytochrome] + nitrite + H2O. Functionally, catalytic subunit of the periplasmic nitrate reductase complex NapAB. Receives electrons from NapB and catalyzes the reduction of nitrate to nitrite. The protein is Periplasmic nitrate reductase of Escherichia coli (strain K12 / MC4100 / BW2952).